Here is a 372-residue protein sequence, read N- to C-terminus: O-glycoside alpha-1,2-mannosyltransferase homolog 2 (372 aa).

Topologically, residues methionine 1–leucine 6 are cytoplasmic. The helical; Signal-anchor for type II membrane protein transmembrane segment at leucine 7–isoleucine 27 threads the bilayer. The Lumenal portion of the chain corresponds to proline 28–leucine 372. The Nucleophile role is filled by glutamate 271.

The protein belongs to the glycosyltransferase 15 family.

It is found in the endoplasmic reticulum membrane. Functionally, probable mannosyltransferase involved in O-glycosylation of cell wall and secreted proteins. This is O-glycoside alpha-1,2-mannosyltransferase homolog 2 (omh2) from Schizosaccharomyces pombe (strain 972 / ATCC 24843) (Fission yeast).